Here is a 157-residue protein sequence, read N- to C-terminus: Probable Brix domain-containing ribosomal biogenesis protein (157 aa).

In terms of domain architecture, Brix spans 1–157 (MLVTTSRKPS…KFNIKGFKKY (157 aa)).

Functionally, probably involved in the biogenesis of the ribosome. The protein is Probable Brix domain-containing ribosomal biogenesis protein of Methanosarcina mazei (strain ATCC BAA-159 / DSM 3647 / Goe1 / Go1 / JCM 11833 / OCM 88) (Methanosarcina frisia).